A 307-amino-acid polypeptide reads, in one-letter code: Ribonuclease Z (307 aa).

7 residues coordinate Zn(2+): His64, His66, Asp68, His69, His141, Asp209, and His267. Catalysis depends on Asp68, which acts as the Proton acceptor.

Belongs to the RNase Z family. Homodimer. It depends on Zn(2+) as a cofactor.

It catalyses the reaction Endonucleolytic cleavage of RNA, removing extra 3' nucleotides from tRNA precursor, generating 3' termini of tRNAs. A 3'-hydroxy group is left at the tRNA terminus and a 5'-phosphoryl group is left at the trailer molecule.. In terms of biological role, zinc phosphodiesterase, which displays some tRNA 3'-processing endonuclease activity. Probably involved in tRNA maturation, by removing a 3'-trailer from precursor tRNA. This is Ribonuclease Z from Thermoplasma acidophilum (strain ATCC 25905 / DSM 1728 / JCM 9062 / NBRC 15155 / AMRC-C165).